The primary structure comprises 928 residues: Kinesin heavy chain (928 aa).

The Kinesin motor domain occupies 7–330 (SIKVVARFRP…LRFGMRAKSI (324 aa)). ATP contacts are provided by residues 88 to 95 (GQTGAGKS) and 238 to 245 (GSEKVGKT). A coiled-coil region spans residues 343-866 (AELKQMLAKA…VKDRLEAAKA (524 aa)). Positions 395-409 (SKSASTTARPSTPSR) are enriched in low complexity. Disordered regions lie at residues 395 to 434 (SKSASTTARPSTPSRLLPESRAETPAISDRAGTPSLPLDK) and 893 to 928 (GGGDAVAGATATNPTIATLQQNPPENKRSSWFFQKS). Over residues 905–928 (NPTIATLQQNPPENKRSSWFFQKS) the composition is skewed to polar residues.

It belongs to the TRAFAC class myosin-kinesin ATPase superfamily. Kinesin family. Kinesin subfamily.

The protein localises to the cytoplasm. It localises to the cytoskeleton. Its function is as follows. Kinesin is a microtubule-associated force-producing protein that may play a role in organelle transport. Its motor activity is directed toward the microtubule's plus end. This chain is Kinesin heavy chain (kin), found in Neurospora crassa (strain ATCC 24698 / 74-OR23-1A / CBS 708.71 / DSM 1257 / FGSC 987).